The chain runs to 227 residues: Large ribosomal subunit protein bL25 (227 aa).

The interval alanine 199 to alanine 227 is disordered. The segment covering alanine 209 to alanine 227 has biased composition (basic and acidic residues).

The protein belongs to the bacterial ribosomal protein bL25 family. CTC subfamily. In terms of assembly, part of the 50S ribosomal subunit; part of the 5S rRNA/L5/L18/L25 subcomplex. Contacts the 5S rRNA. Binds to the 5S rRNA independently of L5 and L18.

This is one of the proteins that binds to the 5S RNA in the ribosome where it forms part of the central protuberance. The chain is Large ribosomal subunit protein bL25 from Methylobacterium radiotolerans (strain ATCC 27329 / DSM 1819 / JCM 2831 / NBRC 15690 / NCIMB 10815 / 0-1).